Reading from the N-terminus, the 444-residue chain is MESVETPVKDGLLYQQHMKFGKKCWRKVWALLYAGGPSGVARLESWDVRDGGLGPGGDRPAGPGRRGERRIIRLADCVSVLPADGESCPRDTGAFLITTTERSHLLAAQHRQSWMDPICQLAFPSTGECSSGSGQAESPKRGFVPMEENSIYSSWQEVAEFPVVVQRTEATTRCQLKGPYLLVLGQDDIQLRETSKPQACYSWPYRFLRKFGSDKGVFSFEAGRRCDSGEGLFAFSSPRAPDICGAVAAAIARQRERLPELAMSPPCPLPRALSLPSLEPPGELREVAPEYELAPSRKLPLTDPGPQSLPLLLSPTQDGTASSLYASVCKQTSKHKATVEHLYENVFMLEASPGLSNGGPEAQEGPPGGRSPLGSPIYHNSEELSWPGSAHDSNLEAQYRRLLELELDDAGGAGRPGAQTGIKAKLVTLLTRERKKGPAPCDRP.

In terms of domain architecture, PH spans 7-123 (PVKDGLLYQQ…WMDPICQLAF (117 aa)). Residues 47 to 66 (DVRDGGLGPGGDRPAGPGRR) are disordered. Residue S138 is modified to Phosphoserine. The IRS-type PTB domain occupies 157–261 (EVAEFPVVVQ…ARQRERLPEL (105 aa)). Residues S274, S308, and S314 each carry the phosphoserine modification. Y325 carries the post-translational modification Phosphotyrosine. Positions 354–390 (GLSNGGPEAQEGPPGGRSPLGSPIYHNSEELSWPGSA) are disordered. Low complexity predominate over residues 358 to 376 (GGPEAQEGPPGGRSPLGSP). A Phosphoserine modification is found at S371.

This sequence belongs to the DOK family. Type A subfamily. As to quaternary structure, on tyrosine phosphorylation, interacts with CSK and INPP5D/SHIP1 via their SH2 domains. Binds ABL1 through the PTB domain and in a kinase-dependent manner. Does not interact with RasGAP. Post-translationally, constitutively tyrosine-phosphorylated. On IL2 stimulation, phosphorylated on C-terminal tyrosine residues possibly by Src kinases. Can also be phosphorylated by ABL1 kinase.

It localises to the cytoplasm. The protein resides in the cell membrane. In terms of biological role, DOK proteins are enzymatically inert adaptor or scaffolding proteins. They provide a docking platform for the assembly of multimolecular signaling complexes. DOK3 is a negative regulator of JNK signaling in B-cells through interaction with INPP5D/SHIP1. May modulate ABL1 function. The sequence is that of Docking protein 3 (Dok3) from Rattus norvegicus (Rat).